The primary structure comprises 230 residues: MPLPDTMFCAQQIHIPPELPDILKQFTKAAIRTQPADVLRWSAGYFSALSRGDPLPVKDRMEMPTATQKTDTGLTQGLLKVLHKQCHHKRYVELTDLEQKWKNLCLPKEKFKALLQLDPCENKIKWINFLALGCSMLGGSLNTALKHLCEILTDDPEGGPARIPFKTFSYVYRYLARLDSDVSPLETESYLASLKENIDARKNGMIGLSDFFFPKRKLLESIENSEDVGH.

The RIIa domain occupies 17–46 (PELPDILKQFTKAAIRTQPADVLRWSAGYF).

The protein belongs to the ropporin family. In terms of assembly, component of the axonemal radial spoke complex 1 (RS1), at least composed of spoke head proteins RSPH1, RSPH3, RSPH9 and the cilia-specific component RSPH4A or sperm-specific component RSPH6A, spoke stalk proteins RSPH14, DNAJB13, DYDC1, ROPN1L and NME5, and the anchor protein IQUB. Interacts with FSCB; the interaction increases upon spermatozoa capacitation conditions. May interact with AKAP3. Interacts with CFAP61. Post-translationally, sumoylated, sumoylation decreases upon spermatozoa capacitation conditions.

The protein resides in the cell projection. Its subcellular location is the cilium. The protein localises to the flagellum. Functionally, functions as part of axonemal radial spoke complexes that play an important part in the motility of sperm and cilia. Important for male fertility. With ROPN1, involved in fibrous sheath integrity and sperm motility, plays a role in PKA-dependent signaling processes required for spermatozoa capacitation. The protein is Ropporin-1-like protein (ROPN1L) of Homo sapiens (Human).